Consider the following 340-residue polypeptide: S-adenosylmethionine:tRNA ribosyltransferase-isomerase (340 aa).

It belongs to the QueA family. As to quaternary structure, monomer.

It is found in the cytoplasm. The enzyme catalyses 7-aminomethyl-7-carbaguanosine(34) in tRNA + S-adenosyl-L-methionine = epoxyqueuosine(34) in tRNA + adenine + L-methionine + 2 H(+). Its pathway is tRNA modification; tRNA-queuosine biosynthesis. Functionally, transfers and isomerizes the ribose moiety from AdoMet to the 7-aminomethyl group of 7-deazaguanine (preQ1-tRNA) to give epoxyqueuosine (oQ-tRNA). This chain is S-adenosylmethionine:tRNA ribosyltransferase-isomerase, found in Aliarcobacter butzleri (strain RM4018) (Arcobacter butzleri).